Reading from the N-terminus, the 58-residue chain is uncharacterized protein (58 aa).

This is an uncharacterized protein from Saccharomyces cerevisiae (strain ATCC 204508 / S288c) (Baker's yeast).